We begin with the raw amino-acid sequence, 348 residues long: Selenide, water dikinase (348 aa).

Residue Cys-17 is part of the active site. Residues Lys-20 and 47 to 49 contribute to the ATP site; that span reads THD. Residue Asp-50 participates in Mg(2+) binding. Residues Asp-67, Asp-90, and 138–140 each bind ATP; that span reads GHT. Residue Asp-90 coordinates Mg(2+). Asp-226 contributes to the Mg(2+) binding site.

It belongs to the selenophosphate synthase 1 family. Class I subfamily. As to quaternary structure, homodimer. The cofactor is Mg(2+).

The catalysed reaction is hydrogenselenide + ATP + H2O = selenophosphate + AMP + phosphate + 2 H(+). Synthesizes selenophosphate from selenide and ATP. The chain is Selenide, water dikinase from Porphyromonas gingivalis (strain ATCC 33277 / DSM 20709 / CIP 103683 / JCM 12257 / NCTC 11834 / 2561).